A 380-amino-acid polypeptide reads, in one-letter code: Glucose-1-phosphate adenylyltransferase (380 aa).

Alpha-D-glucose 1-phosphate-binding positions include Gly-164, 179-180 (EK), and Ser-190.

The protein belongs to the bacterial/plant glucose-1-phosphate adenylyltransferase family. As to quaternary structure, homotetramer.

It catalyses the reaction alpha-D-glucose 1-phosphate + ATP + H(+) = ADP-alpha-D-glucose + diphosphate. It functions in the pathway glycan biosynthesis; glycogen biosynthesis. Involved in the biosynthesis of ADP-glucose, a building block required for the elongation reactions to produce glycogen. Catalyzes the reaction between ATP and alpha-D-glucose 1-phosphate (G1P) to produce pyrophosphate and ADP-Glc. The polypeptide is Glucose-1-phosphate adenylyltransferase (Lactococcus lactis subsp. cremoris (strain SK11)).